We begin with the raw amino-acid sequence, 976 residues long: Probable basic-leucine zipper transcription factor Q (976 aa).

Coiled-coil stretches lie at residues 57-110 (AIDS…QYQQ) and 136-287 (QQQQ…QQQQ). Residues 104–128 (YQQQYQQPYTTPSPPDQIDYNQQLS) form a disordered region. Polar residues-rich tracts occupy residues 374 to 385 (TNFNGTNNSTPN) and 393 to 411 (KLSS…SPPS). The tract at residues 374 to 499 (TNFNGTNNST…PIDSNGDFDL (126 aa)) is disordered. Composition is skewed to low complexity over residues 420-468 (PKNN…FNNN) and 476-490 (STTT…MTSP). The 64-residue stretch at 504 to 567 (EKKKSISRIN…GVEVMRPEPE (64 aa)) folds into the bZIP domain. A basic motif region spans residues 505–507 (KKK). The tract at residues 509 to 516 (ISRINQNL) is leucine-zipper. Residues 855-938 (ENQSNNFGNN…VNSNNNNFNN (84 aa)) show a composition bias toward low complexity. Residues 855–957 (ENQSNNFGNN…SADAIPYPST (103 aa)) form a disordered region.

It belongs to the bZIP family.

It localises to the nucleus. Its function is as follows. Probable transcriptional regulator. This is Probable basic-leucine zipper transcription factor Q (bzpQ) from Dictyostelium discoideum (Social amoeba).